A 343-amino-acid chain; its full sequence is Holliday junction branch migration complex subunit RuvB (343 aa).

Positions Thr4 to Tyr193 are large ATPase domain (RuvB-L). ATP is bound by residues Leu32, Arg33, Gly74, Lys77, Thr78, Thr79, Glu140–Tyr142, Arg183, Tyr193, and Arg230. Thr78 contacts Mg(2+). The tract at residues Glu194–Asp264 is small ATPAse domain (RuvB-S). A head domain (RuvB-H) region spans residues Val267–Lys343. Arg322 and Arg327 together coordinate DNA.

This sequence belongs to the RuvB family. In terms of assembly, homohexamer. Forms an RuvA(8)-RuvB(12)-Holliday junction (HJ) complex. HJ DNA is sandwiched between 2 RuvA tetramers; dsDNA enters through RuvA and exits via RuvB. An RuvB hexamer assembles on each DNA strand where it exits the tetramer. Each RuvB hexamer is contacted by two RuvA subunits (via domain III) on 2 adjacent RuvB subunits; this complex drives branch migration. In the full resolvosome a probable DNA-RuvA(4)-RuvB(12)-RuvC(2) complex forms which resolves the HJ.

The protein resides in the cytoplasm. It carries out the reaction ATP + H2O = ADP + phosphate + H(+). Functionally, the RuvA-RuvB-RuvC complex processes Holliday junction (HJ) DNA during genetic recombination and DNA repair, while the RuvA-RuvB complex plays an important role in the rescue of blocked DNA replication forks via replication fork reversal (RFR). RuvA specifically binds to HJ cruciform DNA, conferring on it an open structure. The RuvB hexamer acts as an ATP-dependent pump, pulling dsDNA into and through the RuvAB complex. RuvB forms 2 homohexamers on either side of HJ DNA bound by 1 or 2 RuvA tetramers; 4 subunits per hexamer contact DNA at a time. Coordinated motions by a converter formed by DNA-disengaged RuvB subunits stimulates ATP hydrolysis and nucleotide exchange. Immobilization of the converter enables RuvB to convert the ATP-contained energy into a lever motion, pulling 2 nucleotides of DNA out of the RuvA tetramer per ATP hydrolyzed, thus driving DNA branch migration. The RuvB motors rotate together with the DNA substrate, which together with the progressing nucleotide cycle form the mechanistic basis for DNA recombination by continuous HJ branch migration. Branch migration allows RuvC to scan DNA until it finds its consensus sequence, where it cleaves and resolves cruciform DNA. In Neisseria meningitidis serogroup A / serotype 4A (strain DSM 15465 / Z2491), this protein is Holliday junction branch migration complex subunit RuvB.